Consider the following 355-residue polypeptide: Probable butyrate kinase (355 aa).

It belongs to the acetokinase family.

It is found in the cytoplasm. The enzyme catalyses butanoate + ATP = butanoyl phosphate + ADP. The sequence is that of Probable butyrate kinase from Listeria monocytogenes serotype 4b (strain CLIP80459).